A 101-amino-acid chain; its full sequence is Small ribosomal subunit protein uS14 (101 aa).

Belongs to the universal ribosomal protein uS14 family. Part of the 30S ribosomal subunit. Contacts proteins S3 and S10.

Its function is as follows. Binds 16S rRNA, required for the assembly of 30S particles and may also be responsible for determining the conformation of the 16S rRNA at the A site. This Albidiferax ferrireducens (strain ATCC BAA-621 / DSM 15236 / T118) (Rhodoferax ferrireducens) protein is Small ribosomal subunit protein uS14.